The following is a 166-amino-acid chain: Transcription antitermination protein NusB (166 aa).

The span at Met-1 to Asp-18 shows a compositional bias: basic and acidic residues. The disordered stretch occupies residues Met-1 to Glu-30.

It belongs to the NusB family.

In terms of biological role, involved in transcription antitermination. Required for transcription of ribosomal RNA (rRNA) genes. Binds specifically to the boxA antiterminator sequence of the ribosomal RNA (rrn) operons. The polypeptide is Transcription antitermination protein NusB (Pseudomonas fluorescens (strain Pf0-1)).